Here is a 282-residue protein sequence, read N- to C-terminus: E3 ubiquitin-protein ligase Siah1 (282 aa).

Positions 1-28 (MSRQTATALPTGTSKCPPSQRVPTLSGT) are disordered. The RING-type zinc finger occupies 41–76 (CPVCFDYVLPPILQCQSGHLVCSNCRPKLTCCPTCR). The segment at 90-282 (VANSVLFPCK…LGINVTISMC (193 aa)) is SBD. The SIAH-type zinc finger occupies 93 to 153 (SVLFPCKYAS…VMPHLLHQHK (61 aa)). Zn(2+) is bound by residues C98, C105, H117, C121, C128, C135, H147, and H152.

It belongs to the SINA (Seven in absentia) family. In terms of assembly, homodimer.

The enzyme catalyses S-ubiquitinyl-[E2 ubiquitin-conjugating enzyme]-L-cysteine + [acceptor protein]-L-lysine = [E2 ubiquitin-conjugating enzyme]-L-cysteine + N(6)-ubiquitinyl-[acceptor protein]-L-lysine.. The protein operates within protein modification; protein ubiquitination. E3 ubiquitin-protein ligase that mediates ubiquitination and subsequent proteasomal degradation of target proteins. E3 ubiquitin ligases accept ubiquitin from an E2 ubiquitin-conjugating enzyme in the form of a thioester and then directly transfers the ubiquitin to targeted substrates. It probably triggers the ubiquitin-mediated degradation of different substrates. The sequence is that of E3 ubiquitin-protein ligase Siah1 (siah1) from Danio rerio (Zebrafish).